Here is a 703-residue protein sequence, read N- to C-terminus: MAAPVGPVKFWRPGTEGPGVSISEERQSLAENSGTTVVYNPYAALSIEQQRQKLPVFKLRNHILYLIENYQTVVIVGETGCGKSTQIPQYLAEAGWTAEGRVVGVTQPRRVAAVTVAGRVAEERGAVLGHEVGYCIRFDDCTDQLATRIKFLTDGMLVREMMVDPLLTKYSVIMLDEAHERTLYTDIAIGLLKKIQKKRGDLRLIVASATLDADKFRDFFNQNETSDPARDTCVILTVEGRTFPVDIFYLQSPVPDYIKSTVETVVKIHQTEGDGDVLAFLTGQEEVETVVSMLIEQARALARTGMKRHLRVLPMYAGLPSFEQMKVFERVSRSVRKVIVATNVAETSITISGIVYVIDCGFVKLRAYNPRTAIECLVVVPVSQASANQRAGRGGRSRSGKCYRLYTEEAFDKLPQSTVPEMQRSNLAPVILQLKALGIDNVLRFHFMSPPPAQSMVQALELLYALGGLDKDCRLTEPLGMRIAEFPLNPMFAKMLLESGNFGCSQEILSIAAMMQIQNIFVVPPNQKSHAIRVHRKFAVEEGDHLTMLNIYEAFIKHNKDSKWCQEHFLNYKGLVRAATVREQLKKLLVKFQVPRKSSEGDPDLVLRCIVSGFFANAARFHSTGAYRTIRDDHELHIHPASVLYAEKPPRWVIYNEVIQTSKYYMRDVTAIESAWLLELAPHFYQQGTHLSLKAKRAKVQDP.

Residues 64-229 (LYLIENYQTV…FNQNETSDPA (166 aa)) form the Helicase ATP-binding domain. 77-84 (GETGCGKS) provides a ligand contact to ATP. Residues 176–179 (DEAH) carry the DEAH box motif. Residues 261-438 (TVETVVKIHQ…PVILQLKALG (178 aa)) enclose the Helicase C-terminal domain.

This sequence belongs to the DEAD box helicase family. DEAH subfamily. In terms of assembly, identified in the spliceosome C complex.

The enzyme catalyses ATP + H2O = ADP + phosphate + H(+). Functionally, may be involved in pre-mRNA splicing. This Homo sapiens (Human) protein is Probable ATP-dependent RNA helicase DHX35 (DHX35).